The sequence spans 89 residues: uncharacterized protein (89 aa).

2 helical membrane passes run 1–21 and 28–48; these read MFLA…ISLI and GISL…TIAA.

The protein resides in the cell membrane. This is an uncharacterized protein from Methanocaldococcus jannaschii (strain ATCC 43067 / DSM 2661 / JAL-1 / JCM 10045 / NBRC 100440) (Methanococcus jannaschii).